Here is a 565-residue protein sequence, read N- to C-terminus: Zinc finger protein 512 (565 aa).

Residues 1–30 (MSSRLGAVPATSGPTTFKQQRSTRIVGAKN) form a disordered region. Over residues 12–23 (SGPTTFKQQRST) the composition is skewed to polar residues. Residues Lys18 and Lys83 each participate in a glycyl lysine isopeptide (Lys-Gly) (interchain with G-Cter in SUMO2) cross-link. Positions 85 to 147 (AATSHVEGSG…QARRIRKEPP (63 aa)) are disordered. The segment covering 118 to 129 (KKHKLYGRKQRP) has biased composition (basic residues). The segment at 196-219 (FTCHHCGKQLRSLAGMKYHVMANH) adopts a C2H2-type 1 zinc-finger fold. Lys226 is covalently cross-linked (Glycyl lysine isopeptide (Lys-Gly) (interchain with G-Cter in SUMO2)). Residues 286-309 (LKCHHCGKPYRSKAGLAYHLRSEH) form a C2H2-type 2 zinc finger. Lys332 participates in a covalent cross-link: Glycyl lysine isopeptide (Lys-Gly) (interchain with G-Cter in SUMO2). The C2H2-type 3; atypical zinc-finger motif lies at 405–429 (IQCPNQGCEAVYSSVSGLKAHLGSC). The segment at 439–462 (YKCLLCQKEFVSESGVKYHINSVH) adopts a C2H2-type 4 zinc-finger fold. Residues 484 to 493 (KQRQQEEEKR) are compositionally biased toward basic and acidic residues. The segment at 484-565 (KQRQQEEEKR…PKTNHKRGRK (82 aa)) is disordered. Basic residues predominate over residues 494 to 507 (RQQHRSRRSLRRRQ). A compositionally biased stretch (basic and acidic residues) spans 522–531 (VGKDQRRNEE). A compositionally biased stretch (basic residues) spans 554-565 (KPPKTNHKRGRK).

This sequence belongs to the krueppel C2H2-type zinc-finger protein family.

It is found in the nucleus. Functionally, may be involved in transcriptional regulation. This chain is Zinc finger protein 512 (ZNF512), found in Macaca fascicularis (Crab-eating macaque).